A 118-amino-acid chain; its full sequence is UPF0102 protein Sde_3146 (118 aa).

The protein belongs to the UPF0102 family.

The protein is UPF0102 protein Sde_3146 of Saccharophagus degradans (strain 2-40 / ATCC 43961 / DSM 17024).